Reading from the N-terminus, the 352-residue chain is UDP-3-O-acylglucosamine N-acyltransferase (352 aa).

H244 acts as the Proton acceptor in catalysis.

This sequence belongs to the transferase hexapeptide repeat family. LpxD subfamily. Homotrimer.

The enzyme catalyses a UDP-3-O-[(3R)-3-hydroxyacyl]-alpha-D-glucosamine + a (3R)-hydroxyacyl-[ACP] = a UDP-2-N,3-O-bis[(3R)-3-hydroxyacyl]-alpha-D-glucosamine + holo-[ACP] + H(+). Its pathway is bacterial outer membrane biogenesis; LPS lipid A biosynthesis. Functionally, catalyzes the N-acylation of UDP-3-O-acylglucosamine using 3-hydroxyacyl-ACP as the acyl donor. Is involved in the biosynthesis of lipid A, a phosphorylated glycolipid that anchors the lipopolysaccharide to the outer membrane of the cell. The chain is UDP-3-O-acylglucosamine N-acyltransferase from Leptospira biflexa serovar Patoc (strain Patoc 1 / Ames).